The sequence spans 1337 residues: Activated Cdc42 kinase-like (1337 aa).

A Phosphoserine modification is found at Ser-71. One can recognise a Protein kinase domain in the interval Ile-133–Met-399. Residues Leu-139–Val-147 and Lys-164 contribute to the ATP site. Asp-260 acts as the Proton acceptor in catalysis. Tyr-291 and Tyr-292 each carry phosphotyrosine. One can recognise an SH3 domain in the interval Met-399 to Glu-460. Residues Ile-488–Gly-502 form the CRIB domain. Positions Ser-714 to Val-739 are disordered. Phosphoserine is present on residues Ser-764 and Ser-778. The segment at Arg-786–Lys-822 is disordered. Polar residues predominate over residues Ser-805 to Asn-815. Residues Ser-831, Ser-918, and Ser-924 each carry the phosphoserine modification. Disordered regions lie at residues Ala-906–Lys-969 and Pro-1024–Gly-1045. Residues Pro-947–Pro-957 show a composition bias toward pro residues.

It belongs to the protein kinase superfamily. Tyr protein kinase family.

It catalyses the reaction L-tyrosyl-[protein] + ATP = O-phospho-L-tyrosyl-[protein] + ADP + H(+). Functionally, likely to act as a downstream effector of Cdc42 during dorsal closure, acting in a kinase independent manner with the other ACK family member Ack to positively regulate expression of the myosin zip by promoting the endocytosis of Egfr in the amnioserosa (AS). This Drosophila melanogaster (Fruit fly) protein is Activated Cdc42 kinase-like.